Here is a 41-residue protein sequence, read N- to C-terminus: Large ribosomal subunit protein bL36 (41 aa).

This sequence belongs to the bacterial ribosomal protein bL36 family.

The chain is Large ribosomal subunit protein bL36 from Maricaulis maris (strain MCS10) (Caulobacter maris).